Reading from the N-terminus, the 141-residue chain is uncharacterized protein (141 aa).

4 helical membrane passes run V7–L27, S47–V67, A75–F95, and V106–A126.

The protein localises to the cell membrane. This is an uncharacterized protein from Bacillus subtilis (strain 168).